Reading from the N-terminus, the 280-residue chain is MLPRNATDKIQGNVSKPCFWKSLSPGQNWKSKSMRSFPEEFVKSTPGAFEHRVVFSVRWGNSWQLWLEREEKDLFMIEEDWDEFVDDNHLGPNDNVFFRHDDKMFLEVQIFKNDGNEIIDAPPEVEPETEPFHPTTPKNSHKETTTASASASASEFSDNWRETHGCADIKNPELYLLNPKNPYFVKTLTKGNDVLYVPKTVIKKYGLKFGPHLSPMHYLLPGDKINGSTKIYGGGSAPCFNGWVDLCRKYNLKTGDSMVCELERSGELVTAVRVHFINKT.

The segment at residues Trp20–Asp114 is a DNA-binding region (TF-B3 1). The tract at residues Pro122–Ala153 is disordered. The TF-B3 2 DNA-binding region spans Tyr183–Phe276.

Its subcellular location is the nucleus. The polypeptide is B3 domain-containing protein At5g25470 (Arabidopsis thaliana (Mouse-ear cress)).